A 246-amino-acid polypeptide reads, in one-letter code: 1-(5-phosphoribosyl)-5-[(5-phosphoribosylamino)methylideneamino] imidazole-4-carboxamide isomerase (246 aa).

The active-site Proton acceptor is Asp8. The active-site Proton donor is Asp130.

It belongs to the HisA/HisF family.

It is found in the cytoplasm. It catalyses the reaction 1-(5-phospho-beta-D-ribosyl)-5-[(5-phospho-beta-D-ribosylamino)methylideneamino]imidazole-4-carboxamide = 5-[(5-phospho-1-deoxy-D-ribulos-1-ylimino)methylamino]-1-(5-phospho-beta-D-ribosyl)imidazole-4-carboxamide. It participates in amino-acid biosynthesis; L-histidine biosynthesis; L-histidine from 5-phospho-alpha-D-ribose 1-diphosphate: step 4/9. The chain is 1-(5-phosphoribosyl)-5-[(5-phosphoribosylamino)methylideneamino] imidazole-4-carboxamide isomerase from Halorhodospira halophila (strain DSM 244 / SL1) (Ectothiorhodospira halophila (strain DSM 244 / SL1)).